A 785-amino-acid chain; its full sequence is Phenylalanine--tRNA ligase beta subunit (785 aa).

In terms of domain architecture, tRNA-binding spans cysteine 38 to phenylalanine 150. Positions valine 394–glutamate 470 constitute a B5 domain. Residues aspartate 448, aspartate 454, glutamate 457, and glutamate 458 each coordinate Mg(2+). Residues serine 690–arginine 783 form the FDX-ACB domain.

This sequence belongs to the phenylalanyl-tRNA synthetase beta subunit family. Type 1 subfamily. In terms of assembly, tetramer of two alpha and two beta subunits. Mg(2+) serves as cofactor.

It is found in the cytoplasm. It carries out the reaction tRNA(Phe) + L-phenylalanine + ATP = L-phenylalanyl-tRNA(Phe) + AMP + diphosphate + H(+). In Ehrlichia canis (strain Jake), this protein is Phenylalanine--tRNA ligase beta subunit.